Here is a 636-residue protein sequence, read N- to C-terminus: Plasma kallikrein (636 aa).

A signal peptide spans 1 to 19 (MIALRQAAYFICLFATVSC). Apple domains are found at residues 21 to 104 (CLTQ…LKRC), 111 to 194 (CHRS…LKAC), 201 to 284 (CRVD…LLTC), and 294 to 377 (CHSK…LRLC). 12 disulfides stabilise this stretch: Cys-21–Cys-104, Cys-47–Cys-77, Cys-51–Cys-57, Cys-111–Cys-194, Cys-137–Cys-166, Cys-141–Cys-147, Cys-201–Cys-284, Cys-227–Cys-256, Cys-231–Cys-237, Cys-294–Cys-377, Cys-320–Cys-349, and Cys-324–Cys-330. N-linked (GlcNAc...) asparagine glycans are attached at residues Asn-66 and Asn-127. Residues Asn-361 and Asn-397 are each glycosylated (N-linked (GlcNAc...) asparagine). Residues 392–627 (IVGGTNASWG…YVDWILEKTQ (236 aa)) form the Peptidase S1 domain. A disulfide bond links Cys-420 and Cys-436. The active-site Charge relay system is the His-435. A glycan (N-linked (GlcNAc...) asparagine) is linked at Asn-454. Asp-484 serves as the catalytic Charge relay system. N-linked (GlcNAc...) asparagine glycosylation is present at Asn-495. Intrachain disulfides connect Cys-518/Cys-585, Cys-549/Cys-564, and Cys-575/Cys-603. Residue Ser-579 is the Charge relay system of the active site.

Belongs to the peptidase S1 family. Plasma kallikrein subfamily. Forms a heterodimer with SERPINA5. The zymogen is activated by factor XIIa, which cleaves the molecule into a light chain, which contains the active site, and a heavy chain, which associates with HMW kininogen. These chains are linked by one or more disulfide bonds.

The protein resides in the secreted. It catalyses the reaction Cleaves selectively Arg-|-Xaa and Lys-|-Xaa bonds, including Lys-|-Arg and Arg-|-Ser bonds in (human) kininogen to release bradykinin.. With respect to regulation, inhibited by SERPINA5. Functionally, the enzyme cleaves Lys-Arg and Arg-Ser bonds. It activates, in a reciprocal reaction, factor XII after its binding to a negatively charged surface. It also releases bradykinin from HMW kininogen and may also play a role in the renin-angiotensin system by converting prorenin into renin. This is Plasma kallikrein (KLKB1) from Bos taurus (Bovine).